The following is a 575-amino-acid chain: Potassium-transporting ATPase potassium-binding subunit (575 aa).

Transmembrane regions (helical) follow at residues 3 to 23 (FEGVLQIVATLVLMVAIVPFF), 69 to 89 (AVLASNAAMFVPVFAVLLLQG), 136 to 156 (CFQFLMFTSAATGLAVGIAFI), 178 to 198 (ILMPISIAFAVVLLSQGVPQS), 266 to 286 (LLEILLLLAVPTSLIYTFGVL), 293 to 313 (GWVLFGTIFVLFVGLVGVAAL), 340 to 360 (FGWAQSALFATATTGTMTGAV), 367 to 387 (LTPLAGLVTLFNLCLQVIWGG), 391 to 411 (GIAYILVFLIIAVFLTGLMVG), 431 to 451 (IIFLVHPVIILVPTAIALAIP), 498 to 518 (VVLLLGRYAPIVALLALAGGL), and 543 to 563 (AGTILILGALTFFPVFALGPI).

This sequence belongs to the KdpA family. In terms of assembly, the system is composed of three essential subunits: KdpA, KdpB and KdpC.

The protein localises to the cell inner membrane. Its function is as follows. Part of the high-affinity ATP-driven potassium transport (or Kdp) system, which catalyzes the hydrolysis of ATP coupled with the electrogenic transport of potassium into the cytoplasm. This subunit binds the periplasmic potassium ions and delivers the ions to the membrane domain of KdpB through an intramembrane tunnel. This is Potassium-transporting ATPase potassium-binding subunit from Gloeobacter violaceus (strain ATCC 29082 / PCC 7421).